Consider the following 611-residue polypeptide: UvrABC system protein C (611 aa).

Positions 6 to 84 constitute a GIY-YIG domain; that stretch reads NNPGVYRMFN…IKRSRPRFNV (79 aa). Residues 194–229 enclose the UVR domain; sequence QSVKDHLAAAMQAASADLDFEHAAVYRDRLAALSHV.

Belongs to the UvrC family. Interacts with UvrB in an incision complex.

The protein localises to the cytoplasm. Functionally, the UvrABC repair system catalyzes the recognition and processing of DNA lesions. UvrC both incises the 5' and 3' sides of the lesion. The N-terminal half is responsible for the 3' incision and the C-terminal half is responsible for the 5' incision. This chain is UvrABC system protein C, found in Brucella suis biovar 1 (strain 1330).